The chain runs to 177 residues: GTP-dependent dephospho-CoA kinase (177 aa).

Aspartate 45, valine 46, valine 47, aspartate 64, and glutamate 120 together coordinate GTP.

Belongs to the GTP-dependent DPCK family.

The enzyme catalyses 3'-dephospho-CoA + GTP = GDP + CoA + H(+). The protein operates within cofactor biosynthesis; coenzyme A biosynthesis. Catalyzes the GTP-dependent phosphorylation of the 3'-hydroxyl group of dephosphocoenzyme A to form coenzyme A (CoA). The protein is GTP-dependent dephospho-CoA kinase of Halobacterium salinarum (strain ATCC 29341 / DSM 671 / R1).